The chain runs to 1133 residues: Probable cation-transporting ATPase 9 (1133 aa).

Residues Met1–Ile6 lie on the Cytoplasmic side of the membrane. The chain crosses the membrane as a helical span at residues Glu7–Lys28. At Gln29–Arg34 the chain is on the extracellular side. Residues Glu35–Arg53 traverse the membrane as a helical segment. Over Pro54–Thr167 the chain is Cytoplasmic. The helical transmembrane segment at Leu168 to Ile190 threads the bilayer. Residues Glu191–Met193 are Extracellular-facing. Residues Tyr194–Cys212 form a helical membrane-spanning segment. Residues Ile213–Ala363 are Cytoplasmic-facing. A helical transmembrane segment spans residues Val364–Ser383. Residues Arg384–Ala396 are Extracellular-facing. The chain crosses the membrane as a helical span at residues Phe397–Thr418. Topologically, residues Asn419–Leu887 are cytoplasmic. Asp451 serves as the catalytic 4-aspartylphosphate intermediate. Mg(2+)-binding residues include Asp827 and Asp831. Residues Gln888 to Ser906 traverse the membrane as a helical segment. At Tyr907–Gln915 the chain is on the extracellular side. A helical membrane pass occupies residues Ala916–Asn931. Over Thr932–Ser948 the chain is Cytoplasmic. Residues Ile949 to Ser972 traverse the membrane as a helical segment. At Leu973–Glu994 the chain is on the extracellular side. The chain crosses the membrane as a helical span at residues Thr995–Ile1018. Over Gly1019 to Thr1030 the chain is Cytoplasmic. A helical transmembrane segment spans residues Ile1031–Val1050. The Extracellular segment spans residues Leu1051–Glu1101. The chain crosses the membrane as a helical span at residues Val1102–Leu1124. Residues Arg1125–Phe1133 are Cytoplasmic-facing.

It belongs to the cation transport ATPase (P-type) (TC 3.A.3) family. Type V subfamily.

The protein resides in the membrane. It carries out the reaction ATP + H2O = ADP + phosphate + H(+). The protein is Probable cation-transporting ATPase 9 (TPA9) of Tetrahymena thermophila.